The chain runs to 366 residues: Cobalt-precorrin-5B C(1)-methyltransferase (366 aa).

It belongs to the CbiD family.

The catalysed reaction is Co-precorrin-5B + S-adenosyl-L-methionine = Co-precorrin-6A + S-adenosyl-L-homocysteine. It participates in cofactor biosynthesis; adenosylcobalamin biosynthesis; cob(II)yrinate a,c-diamide from sirohydrochlorin (anaerobic route): step 6/10. Catalyzes the methylation of C-1 in cobalt-precorrin-5B to form cobalt-precorrin-6A. The protein is Cobalt-precorrin-5B C(1)-methyltransferase of Pseudomonas paraeruginosa (strain DSM 24068 / PA7) (Pseudomonas aeruginosa (strain PA7)).